A 206-amino-acid polypeptide reads, in one-letter code: Proteasome subunit beta 2 (206 aa).

Positions 1–7 are cleaved as a propeptide — removed in mature form; by autocatalysis; sequence MREAVSK. The Nucleophile role is filled by Thr-8.

The protein belongs to the peptidase T1B family. As to quaternary structure, the 20S proteasome core is composed of 14 alpha and 14 beta subunits that assemble into four stacked heptameric rings, resulting in a barrel-shaped structure. The two inner rings, each composed of seven catalytic beta subunits, are sandwiched by two outer rings, each composed of seven alpha subunits. The catalytic chamber with the active sites is on the inside of the barrel. Has a gated structure, the ends of the cylinder being occluded by the N-termini of the alpha-subunits. Is capped at one or both ends by the proteasome regulatory ATPase, PAN.

The protein localises to the cytoplasm. The catalysed reaction is Cleavage of peptide bonds with very broad specificity.. Its activity is regulated as follows. The formation of the proteasomal ATPase PAN-20S proteasome complex, via the docking of the C-termini of PAN into the intersubunit pockets in the alpha-rings, triggers opening of the gate for substrate entry. Interconversion between the open-gate and close-gate conformations leads to a dynamic regulation of the 20S proteasome proteolysis activity. Component of the proteasome core, a large protease complex with broad specificity involved in protein degradation. The polypeptide is Proteasome subunit beta 2 (Desulfurococcus amylolyticus (strain DSM 18924 / JCM 16383 / VKM B-2413 / 1221n) (Desulfurococcus kamchatkensis)).